The chain runs to 481 residues: Glutamyl-tRNA(Gln) amidotransferase subunit A (481 aa).

Residues lysine 76 and serine 151 each act as charge relay system in the active site. Serine 175 serves as the catalytic Acyl-ester intermediate.

It belongs to the amidase family. GatA subfamily. In terms of assembly, heterotrimer of A, B and C subunits.

The catalysed reaction is L-glutamyl-tRNA(Gln) + L-glutamine + ATP + H2O = L-glutaminyl-tRNA(Gln) + L-glutamate + ADP + phosphate + H(+). Functionally, allows the formation of correctly charged Gln-tRNA(Gln) through the transamidation of misacylated Glu-tRNA(Gln) in organisms which lack glutaminyl-tRNA synthetase. The reaction takes place in the presence of glutamine and ATP through an activated gamma-phospho-Glu-tRNA(Gln). The chain is Glutamyl-tRNA(Gln) amidotransferase subunit A from Neisseria gonorrhoeae (strain NCCP11945).